The primary structure comprises 207 residues: uncharacterized protein (207 aa).

Gly51 and Asp72 together coordinate S-adenosyl-L-methionine.

The protein belongs to the methyltransferase superfamily. YrrT family.

Functionally, could be a S-adenosyl-L-methionine-dependent methyltransferase. This is an uncharacterized protein from Staphylococcus carnosus (strain TM300).